We begin with the raw amino-acid sequence, 96 residues long: Small ribosomal subunit protein bS16m (96 aa).

This sequence belongs to the bacterial ribosomal protein bS16 family. In terms of assembly, component of the mitochondrial small ribosomal subunit (mt-SSU). Mature yeast 74S mitochondrial ribosomes consist of a small (37S) and a large (54S) subunit. The 37S small subunit contains a 15S ribosomal RNA (15S mt-rRNA) and at least 32 different proteins. The 54S large subunit contains a 21S rRNA (21S mt-rRNA) and at least 45 different proteins.

It is found in the mitochondrion. In terms of biological role, component of the mitochondrial ribosome (mitoribosome), a dedicated translation machinery responsible for the synthesis of mitochondrial genome-encoded proteins, including at least some of the essential transmembrane subunits of the mitochondrial respiratory chain. The mitoribosomes are attached to the mitochondrial inner membrane and translation products are cotranslationally integrated into the membrane. The chain is Small ribosomal subunit protein bS16m (mrps16) from Schizosaccharomyces pombe (strain 972 / ATCC 24843) (Fission yeast).